The sequence spans 216 residues: Adenylate kinase (216 aa).

Position 10 to 15 (10 to 15) interacts with ATP; the sequence is GAGKGT. Residues 30 to 59 are NMP; it reads STGDMLRAAVKAGTPLGLELKKVMDAGQLV. AMP contacts are provided by residues Thr31, Arg36, 57–59, 85–88, and Gln92; these read QLV and GFPR. The LID stretch occupies residues 122–159; that stretch reads GRRVHLASGRTYHIQYNPPKVEGKDDVTGEDLIQRDDD. Residues Arg123 and 132-133 each bind ATP; that span reads TY. Residues Arg156 and Arg167 each contribute to the AMP site. Gly202 provides a ligand contact to ATP.

This sequence belongs to the adenylate kinase family. Monomer.

Its subcellular location is the cytoplasm. The enzyme catalyses AMP + ATP = 2 ADP. The protein operates within purine metabolism; AMP biosynthesis via salvage pathway; AMP from ADP: step 1/1. In terms of biological role, catalyzes the reversible transfer of the terminal phosphate group between ATP and AMP. Plays an important role in cellular energy homeostasis and in adenine nucleotide metabolism. In Pseudomonas putida (strain GB-1), this protein is Adenylate kinase.